The chain runs to 850 residues: Receptor-like serine/threonine-protein kinase SD1-8 (850 aa).

Residues 1–26 form the signal peptide; it reads MRGLPNFYHSYTFFFFFLLILFPAYS. Over 27–441 the chain is Extracellular; it reads ISANTLSASE…LEDKRNRSAK (415 aa). A Bulb-type lectin domain is found at 31-153; it reads TLSASESLTI…KNSAPDGVLW (123 aa). Asn43, Asn118, and Asn242 each carry an N-linked (GlcNAc...) asparagine glycan. Residues 292–328 enclose the EGF-like domain; the sequence is PKDQCDEYKECGVYGYCDSNTSPVCNCIKGFKPRNPQ. Intrachain disulfides connect Cys296–Cys308, Cys302–Cys316, Cys378–Cys403, and Cys382–Cys388. Residues 347–428 enclose the PAN domain; sequence CGGGDGFVRL…GGQDLYVRLA (82 aa). 2 N-linked (GlcNAc...) asparagine glycosylation sites follow: Asn387 and Asn437. The chain crosses the membrane as a helical span at residues 442–462; it reads IIGSSIGVSVLLLLSFIIFFL. The Cytoplasmic segment spans residues 463 to 850; it reads WKRKQKRSIL…QITVSVLDAR (388 aa). The Protein kinase domain maps to 526–807; sequence FSNANKLGQG…LMLGSESTTI (282 aa). ATP-binding positions include 532-540 and Lys554; that span reads LGQGGFGIV. A caM-binding region spans residues 615 to 632; the sequence is SRNSKLNWQMRFDIINGI. Asp651 functions as the Proton acceptor in the catalytic mechanism.

The protein belongs to the protein kinase superfamily. Ser/Thr protein kinase family. In terms of assembly, interacts with PUB9, PUB13, PUB14 and PUB38. As to expression, expressed in the root-hypocotyl transition zone, at the base of lateral roots, axillary buds and pedicels.

The protein resides in the cell membrane. It catalyses the reaction L-seryl-[protein] + ATP = O-phospho-L-seryl-[protein] + ADP + H(+). It carries out the reaction L-threonyl-[protein] + ATP = O-phospho-L-threonyl-[protein] + ADP + H(+). Its function is as follows. Involved in the regulation of cellular expansion and differentiation. This Arabidopsis thaliana (Mouse-ear cress) protein is Receptor-like serine/threonine-protein kinase SD1-8 (SD18).